The following is a 343-amino-acid chain: MEQEDFNIREHQLTSRERDFENALRPLSFEDFSGQDKVVENLRIFVKAARLRGEALDHVLLHGPPGLGKTTLSNIIANELGVGFKVTSGPVLDKPGDLAGVLTSLEPNDVLFIDEIHRLSPVVEEYLYSAMEDYRIDIMIDKGPSARSIQIDLNPFTLVGATTRSGLLTAPLRARFGINLHLEYYDDDILSNIIRRSASILDVPCSVRAASEIASRSRGTPRIANALLRRVRDFAQVKGSGSIDTEIAQFALEALNIDKYGLDEIDNKILCTIIDKFKGGPVGLTTIATALGEDAGTIEEVYEPFLIKEGFMKRTPRGREVTELAYKHLGRSLYSSQKTLFND.

Residues 1-185 (MEQEDFNIRE…FGINLHLEYY (185 aa)) are large ATPase domain (RuvB-L). Residues L24, R25, G66, K69, T70, T71, 132-134 (EDY), R175, Y185, and R222 each bind ATP. T70 provides a ligand contact to Mg(2+). The tract at residues 186–256 (DDDILSNIIR…IAQFALEALN (71 aa)) is small ATPAse domain (RuvB-S). Positions 259-343 (KYGLDEIDNK…YSSQKTLFND (85 aa)) are head domain (RuvB-H). The DNA site is built by R314 and R319.

This sequence belongs to the RuvB family. As to quaternary structure, homohexamer. Forms an RuvA(8)-RuvB(12)-Holliday junction (HJ) complex. HJ DNA is sandwiched between 2 RuvA tetramers; dsDNA enters through RuvA and exits via RuvB. An RuvB hexamer assembles on each DNA strand where it exits the tetramer. Each RuvB hexamer is contacted by two RuvA subunits (via domain III) on 2 adjacent RuvB subunits; this complex drives branch migration. In the full resolvosome a probable DNA-RuvA(4)-RuvB(12)-RuvC(2) complex forms which resolves the HJ.

The protein localises to the cytoplasm. The catalysed reaction is ATP + H2O = ADP + phosphate + H(+). Functionally, the RuvA-RuvB-RuvC complex processes Holliday junction (HJ) DNA during genetic recombination and DNA repair, while the RuvA-RuvB complex plays an important role in the rescue of blocked DNA replication forks via replication fork reversal (RFR). RuvA specifically binds to HJ cruciform DNA, conferring on it an open structure. The RuvB hexamer acts as an ATP-dependent pump, pulling dsDNA into and through the RuvAB complex. RuvB forms 2 homohexamers on either side of HJ DNA bound by 1 or 2 RuvA tetramers; 4 subunits per hexamer contact DNA at a time. Coordinated motions by a converter formed by DNA-disengaged RuvB subunits stimulates ATP hydrolysis and nucleotide exchange. Immobilization of the converter enables RuvB to convert the ATP-contained energy into a lever motion, pulling 2 nucleotides of DNA out of the RuvA tetramer per ATP hydrolyzed, thus driving DNA branch migration. The RuvB motors rotate together with the DNA substrate, which together with the progressing nucleotide cycle form the mechanistic basis for DNA recombination by continuous HJ branch migration. Branch migration allows RuvC to scan DNA until it finds its consensus sequence, where it cleaves and resolves cruciform DNA. In Bacteroides thetaiotaomicron (strain ATCC 29148 / DSM 2079 / JCM 5827 / CCUG 10774 / NCTC 10582 / VPI-5482 / E50), this protein is Holliday junction branch migration complex subunit RuvB.